The chain runs to 259 residues: Bis(5'-nucleosyl)-tetraphosphatase, symmetrical (259 aa).

This sequence belongs to the Ap4A hydrolase family.

It carries out the reaction P(1),P(4)-bis(5'-adenosyl) tetraphosphate + H2O = 2 ADP + 2 H(+). Functionally, hydrolyzes diadenosine 5',5'''-P1,P4-tetraphosphate to yield ADP. This Klebsiella aerogenes (Enterobacter aerogenes) protein is Bis(5'-nucleosyl)-tetraphosphatase, symmetrical (apaH).